The sequence spans 122 residues: Small ribosomal subunit protein uS13 (122 aa).

A disordered region spans residues 94–122; the sequence is KQLPVRGQRTHTNARTRKGKAKPIAGKKK.

Belongs to the universal ribosomal protein uS13 family. Part of the 30S ribosomal subunit. Forms a loose heterodimer with protein S19. Forms two bridges to the 50S subunit in the 70S ribosome.

Its function is as follows. Located at the top of the head of the 30S subunit, it contacts several helices of the 16S rRNA. In the 70S ribosome it contacts the 23S rRNA (bridge B1a) and protein L5 of the 50S subunit (bridge B1b), connecting the 2 subunits; these bridges are implicated in subunit movement. Contacts the tRNAs in the A and P-sites. This Methylorubrum populi (strain ATCC BAA-705 / NCIMB 13946 / BJ001) (Methylobacterium populi) protein is Small ribosomal subunit protein uS13.